The following is a 705-amino-acid chain: Pentatricopeptide repeat-containing protein At1g09410, mitochondrial (705 aa).

The N-terminal 11 residues, 1 to 11, are a transit peptide targeting the mitochondrion; sequence MKSQILLRRTY. PPR repeat units follow at residues 16 to 46, 47 to 77, 78 to 112, 113 to 139, 140 to 170, 171 to 205, 206 to 232, 233 to 267, 268 to 294, 295 to 329, 330 to 364, 365 to 395, 396 to 430, 432 to 462, and 468 to 498; these read PPPT…CDSK, SISS…MPDR, NIIS…NVVS, WTAL…MPEK, NKVS…IPDK, DNIA…SVIT, WTTM…MPEK, TEVS…PVIA, CNAM…MKER, NDAS…GVRP, TFPT…QFDV, DVYV…FPSK, DIIM…GSTK, NEVT…MESV, and ITAH…MTVE. The tract at residues 503 to 578 is type E motif; that stretch reads VWGSLLGACR…SPGCSWTEVE (76 aa). Residues 579 to 610 are type E(+) motif; that stretch reads NKVHAFTRGGINSHPEQESILKILDELDGLLR. The type DYW motif stretch occupies residues 611-705; that stretch reads EAGYNPDCSY…NGECSCKDYW (95 aa).

This sequence belongs to the PPR family. PCMP-H subfamily.

The protein localises to the mitochondrion. This chain is Pentatricopeptide repeat-containing protein At1g09410, mitochondrial (PCMP-H18), found in Arabidopsis thaliana (Mouse-ear cress).